The sequence spans 231 residues: MGNSVMEKIKGGLVVSCQALEDEPLHSAFIMSKMALAAVQGGAVGIRANTAKDIRAIQSEIDVPIIGIYKKDYDDSDVFITPTLEEVREICETGVEIVAMDATTRKRPHNEDLKDILNAIRKEFPNTLFMADTGSIEDVYYADSLGFDLIGTTLYGYTEETANKNISDDDFSHLKEVLKSTKRPVIAEGKIDSPSKARQVLTLGCYAVVVGGAVTRPQEITTRFTNEIKKI.

The protein belongs to the NanE family.

It catalyses the reaction an N-acyl-D-glucosamine 6-phosphate = an N-acyl-D-mannosamine 6-phosphate. It functions in the pathway amino-sugar metabolism; N-acetylneuraminate degradation; D-fructose 6-phosphate from N-acetylneuraminate: step 3/5. In terms of biological role, converts N-acetylmannosamine-6-phosphate (ManNAc-6-P) to N-acetylglucosamine-6-phosphate (GlcNAc-6-P). This is Putative N-acetylmannosamine-6-phosphate 2-epimerase from Listeria monocytogenes serotype 4b (strain F2365).